A 57-amino-acid chain; its full sequence is Large ribosomal subunit protein bL32c (57 aa).

It belongs to the bacterial ribosomal protein bL32 family.

Its subcellular location is the plastid. The protein localises to the chloroplast. This chain is Large ribosomal subunit protein bL32c, found in Nandina domestica (Heavenly bamboo).